The sequence spans 78 residues: Acyl carrier protein (78 aa).

The 76-residue stretch at serine 2–glutamine 77 folds into the Carrier domain. Serine 37 is subject to O-(pantetheine 4'-phosphoryl)serine.

It belongs to the acyl carrier protein (ACP) family. 4'-phosphopantetheine is transferred from CoA to a specific serine of apo-ACP by AcpS. This modification is essential for activity because fatty acids are bound in thioester linkage to the sulfhydryl of the prosthetic group.

It is found in the cytoplasm. Its pathway is lipid metabolism; fatty acid biosynthesis. Functionally, carrier of the growing fatty acid chain in fatty acid biosynthesis. This is Acyl carrier protein from Sinorhizobium fredii (strain NBRC 101917 / NGR234).